A 25-amino-acid polypeptide reads, in one-letter code: Kappa-conotoxin RIIIJ (25 aa).

A 4-hydroxyproline mark is found at Pro-2, Pro-3, Pro-7, Pro-8, Pro-13, Pro-15, and Pro-21. 3 disulfide bridges follow: Cys-4-Cys-17, Cys-5-Cys-22, and Cys-12-Cys-23.

This sequence belongs to the conotoxin M superfamily. In terms of tissue distribution, expressed by the venom duct.

It localises to the secreted. Functionally, kappa-conotoxins inhibits voltage-gated potassium channels. This toxin dose-dependently and reversibly inhibits the Kv1.2/KCNA2 channel in mammalia. Does not exert protective effect on cardiac tissue when administered after an ischemic event. In Conus radiatus (Rayed cone), this protein is Kappa-conotoxin RIIIJ.